A 136-amino-acid polypeptide reads, in one-letter code: Small ribosomal subunit protein uS9 (136 aa).

A disordered region spans residues 96–136 (LSPDNRKPLKTEGHLSRDPRAKERRKYGLKKARKAPQFSKR). Basic and acidic residues predominate over residues 98–116 (PDNRKPLKTEGHLSRDPRA). Residues 117–136 (KERRKYGLKKARKAPQFSKR) are compositionally biased toward basic residues.

Belongs to the universal ribosomal protein uS9 family.

The sequence is that of Small ribosomal subunit protein uS9 from Prochlorococcus marinus (strain MIT 9515).